The sequence spans 1353 residues: Ankyrin repeat domain-containing protein 36B (1353 aa).

ANK repeat units follow at residues 19–48 (YHLKRIHRAVLRGNLEKLKYLLLTYYDANK), 52–81 (KERTALHLACATGQPEMVHLLVSRRCELNL), 85–114 (EDRTPLIKAVQLRQEACATLLLQNGADPNI), 118–147 (FGRTALHYAVYNEDTSMIEKLLSHGTNIEE), 151–180 (NEYQPLLLAVSRRKVKMVEFLLKKKANVNA), and 184–213 (LGRSALILAVTLGEKDIVILLLQHNIDVFS). Disordered regions lie at residues 249-307 (PINS…KDSV) and 349-607 (MGGG…KATS). Positions 250–259 (INSNPVSPQK) are enriched in polar residues. Basic and acidic residues-rich tracts occupy residues 260 to 272 (QRAEKATSDDKDS) and 295 to 306 (PAEKATSDEKDS). 2 stretches are compositionally biased toward polar residues: residues 355-367 (GTVSSQKQPASKT) and 389-400 (GTVSSQKQQALK). 2 stretches are compositionally biased toward basic and acidic residues: residues 436–455 (TSDEKDSFSNITREKKDGEI) and 471–491 (SVKEDSVLNIAREKKDGEKSR). The segment covering 579–600 (VSNIPTEIKDGQQSGTVSSQKQ) has biased composition (polar residues). 4 coiled-coil regions span residues 731-762 (AEQDLEMASEGEQKRLEEYENNQPQVKNQIHS), 821-908 (IKLK…YRIE), 937-1055 (SETD…DHDQ), and 1119-1344 (VFEH…LQHS).

The protein belongs to the ANKRD36 family.

The chain is Ankyrin repeat domain-containing protein 36B (ANKRD36B) from Homo sapiens (Human).